We begin with the raw amino-acid sequence, 121 residues long: MSFNDKAAEAVASGDIGVGWLLSDQCEVFWNVGSWEGANPCEILTEWKKSAMTPITIAGLKFTIIGKTPERLVSTNIGGQGHIVGAKCTNYPGYLVCWCPATVGPNIAYSVIQKLADLVKA.

Belongs to the Asgard profilin family.

The protein resides in the cytoplasm. The protein localises to the cytoskeleton. In terms of biological role, binds to actin and affects the structure of the cytoskeleton. At high concentrations inhibits spontaneous rabbit actin nucleation. This strongly suggests this archaea has a profilin-regulated actin system, and actin-type genes can be identified in this organism. The protein is Heimdall profilin of Heimdallarchaeota archaeon (strain LC_2).